We begin with the raw amino-acid sequence, 720 residues long: MELGCWTQLGLTFLQLLLISSLPREYTVINEACPGAEWNIMCRECCEYDQIECVCPGKKEVVGYTIPCCRNEENECDSCLIHPGCTIFENCKSCRNGSWGGTLDDFYVKGFYCAECRAGWYGGDCMRCGQVLRAPKGQILLESYPLNAHCEWTIHAKPGFVIQLRFVMLSLEFDYMCQYDYVEVRDGDNRDGQIIKRVCGNERPAPIQSTGSSLHVLFHSDGSKNFDGFHAIFEEITACSSSPCFHDGTCVLDKAGSYKCACLAGYTGQRCENLLEERNCSDPGGPVNGYQKITGGPGLINGRHAKIGTVVSFFCNNSYVLSGNEKRTCQQNGEWSGKQPICIKACREPKISDLVRRRVLPIQVQSRETPLHQLYSAAFSKQKLQSAPTKKPALPFGDLPMGYQHLHTQLQYECISPFYRRLGSSRRTCLRTGKWSGQAPSCIPICGKIENVTAPKTQGLRWPWQAAIYRRTSGVHDGSLHKGAWFLVCSGALVNERTVVVAAHCVTDLGKVTMIKTADLKVILGKFYRDDDRDEKTTQSLRISAIILHPNYDPILLDADIAILKLLDKARISTRVQPICLAASRDLSTSFQESHITVAGWNVLADVRSPGFKNDTLRSGVVSVVDSLLCEEQHEDHGIPVSVTDNMFCASQDPTAPSDICTAETGGIAAVSFPGRASPEPRWHLMGLVSWSYDKTCSHRLSTAFTKVLPFKDWIERNMK.

A signal peptide spans Met-1–Ser-21. 8 disulfides stabilise this stretch: Cys-128–Cys-150, Cys-177–Cys-199, Cys-239–Cys-250, Cys-244–Cys-260, Cys-262–Cys-271, Cys-280–Cys-329, Cys-315–Cys-342, and Cys-414–Cys-442. One can recognise a CUB domain in the interval Cys-128–Ile-236. Positions Glu-235–Glu-272 constitute an EGF-like domain. Sushi domains lie at Arg-278–Lys-344 and Ala-387–Pro-444. The Peptidase S1 domain occupies Ile-445 to Lys-720. Asn-451 is a glycosylation site (N-linked (GlcNAc...) asparagine). Cys-489 and Cys-505 are oxidised to a cystine. N-linked (GlcNAc...) asparagine glycosylation is present at Asn-614. 2 cysteine pairs are disulfide-bonded: Cys-630–Cys-649 and Cys-661–Cys-697.

This sequence belongs to the peptidase S1 family.

The protein resides in the secreted. May play a role in regeneration of skeletal muscle. The sequence is that of Inactive serine protease PAMR1 (PAMR1) from Pongo abelii (Sumatran orangutan).